Here is a 306-residue protein sequence, read N- to C-terminus: Porphobilinogen deaminase (306 aa).

C237 is subject to S-(dipyrrolylmethanemethyl)cysteine.

The protein belongs to the HMBS family. As to quaternary structure, monomer. It depends on dipyrromethane as a cofactor.

It catalyses the reaction 4 porphobilinogen + H2O = hydroxymethylbilane + 4 NH4(+). It participates in porphyrin-containing compound metabolism; protoporphyrin-IX biosynthesis; coproporphyrinogen-III from 5-aminolevulinate: step 2/4. In terms of biological role, tetrapolymerization of the monopyrrole PBG into the hydroxymethylbilane pre-uroporphyrinogen in several discrete steps. In Syntrophus aciditrophicus (strain SB), this protein is Porphobilinogen deaminase.